Reading from the N-terminus, the 184-residue chain is Large ribosomal subunit protein uL5 (184 aa).

It belongs to the universal ribosomal protein uL5 family. Part of the 50S ribosomal subunit; part of the 5S rRNA/L5/L18/L25 subcomplex. Contacts the 5S rRNA and the P site tRNA. Forms a bridge to the 30S subunit in the 70S ribosome.

Its function is as follows. This is one of the proteins that bind and probably mediate the attachment of the 5S RNA into the large ribosomal subunit, where it forms part of the central protuberance. In the 70S ribosome it contacts protein S13 of the 30S subunit (bridge B1b), connecting the 2 subunits; this bridge is implicated in subunit movement. Contacts the P site tRNA; the 5S rRNA and some of its associated proteins might help stabilize positioning of ribosome-bound tRNAs. The sequence is that of Large ribosomal subunit protein uL5 from Syntrophotalea carbinolica (strain DSM 2380 / NBRC 103641 / GraBd1) (Pelobacter carbinolicus).